The primary structure comprises 249 residues: Putative TrmH family tRNA/rRNA methyltransferase (249 aa).

Positions 196, 216, and 225 each coordinate S-adenosyl-L-methionine.

Belongs to the class IV-like SAM-binding methyltransferase superfamily. RNA methyltransferase TrmH family.

This Staphylococcus haemolyticus (strain JCSC1435) protein is Putative TrmH family tRNA/rRNA methyltransferase.